A 189-amino-acid polypeptide reads, in one-letter code: UPF0301 protein RC0043 (189 aa).

It belongs to the UPF0301 (AlgH) family.

The sequence is that of UPF0301 protein RC0043 from Rickettsia conorii (strain ATCC VR-613 / Malish 7).